Reading from the N-terminus, the 415-residue chain is Lipoyl synthase, apicoplast (415 aa).

Residues 1 to 23 (MHFGIPSLFYLYILFSIIMRIKC) form the signal peptide. [4Fe-4S] cluster contacts are provided by Cys-153, Cys-158, Cys-164, Cys-179, Cys-183, Cys-186, and Ser-394. The 219-residue stretch at 165 to 383 (WNIGTATIML…KEEGLKMGFK (219 aa)) folds into the Radical SAM core domain.

This sequence belongs to the radical SAM superfamily. Lipoyl synthase family. The cofactor is [4Fe-4S] cluster.

Its subcellular location is the plastid. The protein resides in the apicoplast. It carries out the reaction [[Fe-S] cluster scaffold protein carrying a second [4Fe-4S](2+) cluster] + N(6)-octanoyl-L-lysyl-[protein] + 2 oxidized [2Fe-2S]-[ferredoxin] + 2 S-adenosyl-L-methionine + 4 H(+) = [[Fe-S] cluster scaffold protein] + N(6)-[(R)-dihydrolipoyl]-L-lysyl-[protein] + 4 Fe(3+) + 2 hydrogen sulfide + 2 5'-deoxyadenosine + 2 L-methionine + 2 reduced [2Fe-2S]-[ferredoxin]. The protein operates within protein modification; protein lipoylation via endogenous pathway; protein N(6)-(lipoyl)lysine from octanoyl-[acyl-carrier-protein]: step 2/2. Catalyzes the radical-mediated insertion of two sulfur atoms into the C-6 and C-8 positions of the octanoyl moiety bound to the lipoyl domains of lipoate-dependent enzymes, thereby converting the octanoylated domains into lipoylated derivatives. This Plasmodium falciparum (isolate 3D7) protein is Lipoyl synthase, apicoplast.